A 180-amino-acid polypeptide reads, in one-letter code: Small ribosomal subunit protein uS4 (180 aa).

Positions 103-165 (RRLQTIVYRK…KGSPFAKEGH (63 aa)) constitute an S4 RNA-binding domain.

The protein belongs to the universal ribosomal protein uS4 family. As to quaternary structure, part of the 30S ribosomal subunit. Contacts protein S5. The interaction surface between S4 and S5 is involved in control of translational fidelity.

Its function is as follows. One of the primary rRNA binding proteins, it binds directly to 16S rRNA where it nucleates assembly of the body of the 30S subunit. With S5 and S12 plays an important role in translational accuracy. The protein is Small ribosomal subunit protein uS4 of Thermococcus kodakarensis (strain ATCC BAA-918 / JCM 12380 / KOD1) (Pyrococcus kodakaraensis (strain KOD1)).